The following is a 141-amino-acid chain: Nucleoside diphosphate kinase (141 aa).

6 residues coordinate ATP: Lys11, Phe59, Arg87, Thr93, Arg104, and Asn114. The Pros-phosphohistidine intermediate role is filled by His117.

Belongs to the NDK family. Homotetramer. Mg(2+) is required as a cofactor.

It localises to the cytoplasm. It catalyses the reaction a 2'-deoxyribonucleoside 5'-diphosphate + ATP = a 2'-deoxyribonucleoside 5'-triphosphate + ADP. The catalysed reaction is a ribonucleoside 5'-diphosphate + ATP = a ribonucleoside 5'-triphosphate + ADP. Functionally, major role in the synthesis of nucleoside triphosphates other than ATP. The ATP gamma phosphate is transferred to the NDP beta phosphate via a ping-pong mechanism, using a phosphorylated active-site intermediate. This Legionella pneumophila (strain Lens) protein is Nucleoside diphosphate kinase.